The primary structure comprises 601 residues: Ribosomal oxygenase 1 (601 aa).

Over residues 1–11 (MAACGAEERQR) the composition is skewed to basic and acidic residues. The disordered stretch occupies residues 1 to 149 (MAACGAEERQ…PGGGGVPGLL (149 aa)). A compositionally biased stretch (low complexity) spans 61–70 (ERAAPPQGAA). Basic and acidic residues predominate over residues 73–87 (DRVERAGSSEAKQGD). Positions 254–399 (CSLRLLSPQA…DFLEKLLPAA (146 aa)) constitute a JmjC domain. Fe cation is bound by residues histidine 300, aspartate 302, and histidine 365.

The protein belongs to the ROX family. NO66 subfamily. The cofactor is Fe(2+).

The protein localises to the nucleus. The protein resides in the nucleolus. It localises to the nucleoplasm. It carries out the reaction N(6),N(6)-dimethyl-L-lysyl(36)-[histone H3] + 2 2-oxoglutarate + 2 O2 = L-lysyl(36)-[histone H3] + 2 formaldehyde + 2 succinate + 2 CO2. The catalysed reaction is N(6)-methyl-L-lysyl-[protein] + 2-oxoglutarate + O2 = L-lysyl-[protein] + formaldehyde + succinate + CO2. The enzyme catalyses L-histidyl-[protein] + 2-oxoglutarate + O2 = (3S)-3-hydroxy-L-histidyl-[protein] + succinate + CO2. Functionally, oxygenase that can act as both a histone lysine demethylase and a ribosomal histidine hydroxylase. Specifically demethylates 'Lys-4' (H3K4me) and 'Lys-36' (H3K36me) of histone H3, thereby playing a central role in histone code. Preferentially demethylates trimethylated H3 'Lys-4' (H3K4me3) and monomethylated H3 'Lys-4' (H3K4me1) residues, while it has weaker activity for dimethylated H3 'Lys-36' (H3K36me2). Also catalyzes demethylation of non-histone proteins. Also catalyzes the hydroxylation of 60S ribosomal protein L8 on 'His-216', thereby playing a role in ribosome biogenesis. This Gallus gallus (Chicken) protein is Ribosomal oxygenase 1 (RIOX1).